The following is a 169-amino-acid chain: uncharacterized protein (169 aa).

Residues 1 to 91 (MFSSTFRRLA…NKEQYTVRCL (91 aa)) constitute a mitochondrion transit peptide. The interval 54–76 (PQPKSPGSLPSSTRTAPNPNGEE) is disordered. Residues 61–71 (SLPSSTRTAPN) are compositionally biased toward polar residues.

It is found in the mitochondrion. This is an uncharacterized protein from Trypanosoma brucei brucei (strain 927/4 GUTat10.1).